The following is a 143-amino-acid chain: Anti-sigma F factor (143 aa).

This sequence belongs to the anti-sigma-factor family.

The enzyme catalyses L-seryl-[protein] + ATP = O-phospho-L-seryl-[protein] + ADP + H(+). The catalysed reaction is L-threonyl-[protein] + ATP = O-phospho-L-threonyl-[protein] + ADP + H(+). Its function is as follows. Binds to sigma F and blocks its ability to form an RNA polymerase holoenzyme (E-sigma F). Phosphorylates SpoIIAA on a serine residue. This phosphorylation may enable SpoIIAA to act as an anti-anti-sigma factor that counteracts SpoIIAB and thus releases sigma F from inhibition. The protein is Anti-sigma F factor of Clostridium beijerinckii (strain ATCC 51743 / NCIMB 8052) (Clostridium acetobutylicum).